Consider the following 93-residue polypeptide: Cell division topological specificity factor (93 aa).

It belongs to the MinE family.

Prevents the cell division inhibition by proteins MinC and MinD at internal division sites while permitting inhibition at polar sites. This ensures cell division at the proper site by restricting the formation of a division septum at the midpoint of the long axis of the cell. This chain is Cell division topological specificity factor, found in Synechococcus sp. (strain WH7803).